A 128-amino-acid polypeptide reads, in one-letter code: Small ribosomal subunit protein uS8 (128 aa).

It belongs to the universal ribosomal protein uS8 family. Part of the 30S ribosomal subunit. Contacts proteins S5 and S12.

Functionally, one of the primary rRNA binding proteins, it binds directly to 16S rRNA central domain where it helps coordinate assembly of the platform of the 30S subunit. The chain is Small ribosomal subunit protein uS8 from Methylacidiphilum infernorum (isolate V4) (Methylokorus infernorum (strain V4)).